The primary structure comprises 388 residues: Chitinase 4 (388 aa).

A GH18 domain is found at 22–375 (FKTCVYFSNW…KNFVDQLGGV (354 aa)). Asn30 and Asn82 each carry an N-linked (GlcNAc...) asparagine glycan. Chitin contacts are provided by residues 82 to 83 (NQ) and 109 to 112 (GGWG). N-linked (GlcNAc...) asparagine glycosylation is found at Asn123 and Asn132. Catalysis depends on Glu151, which acts as the Proton donor. A chitin-binding site is contributed by Tyr152. Residue Asn155 is glycosylated (N-linked (GlcNAc...) asparagine). 208–211 (MCYD) contacts chitin. A glycan (N-linked (GlcNAc...) asparagine) is linked at Asn237. Residue Trp350 coordinates chitin.

It belongs to the glycosyl hydrolase 18 family. Chitinase class V subfamily.

Its subcellular location is the secreted. The catalysed reaction is Random endo-hydrolysis of N-acetyl-beta-D-glucosaminide (1-&gt;4)-beta-linkages in chitin and chitodextrins.. Functionally, chitinase involved in the remodeling of chitin in the fungal cell wall. Plays a role in sporulation. In Candida albicans (strain SC5314 / ATCC MYA-2876) (Yeast), this protein is Chitinase 4 (CHT4).